The sequence spans 120 residues: METRLNLLCEAGVIDKDICKGMMQVVNVLETECHLPVRSEQGTMAMTHMASALMRSRRGEEIEPLDNELLAELAQSSHWQAVVQLHQVLLKEFALEVNPCEEGYLLANLYGLWMAANEEV.

A PRD domain is found at 13–119; sequence VIDKDICKGM…YGLWMAANEE (107 aa).

This is an uncharacterized protein from Escherichia coli (strain K12).